The following is a 180-amino-acid chain: Bifunctional protein PyrR (180 aa).

The short motif at 101–113 is the PRPP-binding element; sequence VVLVDDVIFKGRT.

The protein belongs to the purine/pyrimidine phosphoribosyltransferase family. PyrR subfamily.

It carries out the reaction UMP + diphosphate = 5-phospho-alpha-D-ribose 1-diphosphate + uracil. Regulates the transcription of the pyrimidine nucleotide (pyr) operon in response to exogenous pyrimidines. Its function is as follows. Also displays a weak uracil phosphoribosyltransferase activity which is not physiologically significant. In Trichormus variabilis (strain ATCC 29413 / PCC 7937) (Anabaena variabilis), this protein is Bifunctional protein PyrR.